Reading from the N-terminus, the 502-residue chain is D-erythritol 1-phosphate dehydrogenase (502 aa).

8–36 contacts FAD; it reads DLFVIGGGINGAGVARDAAGRGLKVVLAE.

The protein belongs to the FAD-dependent glycerol-3-phosphate dehydrogenase family. FAD is required as a cofactor.

The enzyme catalyses D-erythritol 1-phosphate + NADP(+) = D-erythrulose 1-phosphate + NADPH + H(+). It participates in carbohydrate metabolism; erythritol degradation. Its function is as follows. Catalyzes the oxydation of D-erythritol 1-phosphate to D-erythrulose 1-phosphate. The sequence is that of D-erythritol 1-phosphate dehydrogenase from Brucella abortus (strain 2308).